The sequence spans 598 residues: MQHIRNFSIIAHIDHGKSTLADRLIQYCGGLSEREMESQVLDSMDLERERGITIKAQTAALHYRAKDGQRYNLNLIDTPGHVDFSYEVSRSLSACEGALLVVDASQGVEAQTVANCYTALDLNVEVVPVLNKIDLPAADPDNARSEIEDVIGVDASEAVLCSAKTGLGIEEVLEAIVARVPAPKGDPAAPLKALIIDSWFDNYVGVVMLVRVVDGVLKPKDRILLMSTAAQYPCDQVGVFTPKSVAREELSAGEVGFVIAGIKELEAAKVGDTITLATRPAAEPLPGFKEIKPQVFAGLYPVESSEYDQLRDSLEKLRLNDAALQFEPEVSQALGFGFRCGFLGLLHMDIVQERLEREFDMDLITTAPTVVYEVVLNNGDIIHVENPAKLPEVGKYAEIREPIITATIFLPQEYVGPVITLCNLKRGSQIDMRYHGRQVQLIYELPMNEVVMDFFDKLKSVSRGYASLDYEFKEYRSADLVKLDLMVGGEKVDALSVIVHRASAQYRGRELAAKLRGLIPRQMFDVAVQAAIGSHIIARETIKALRKNVLAKCYGGDITRKKKLLEKQKEGKKRMKQVGNVEIPQEAFLAVLRVDEGK.

Residues 2–184 enclose the tr-type G domain; the sequence is QHIRNFSIIA…AIVARVPAPK (183 aa). GTP is bound by residues 14–19 and 131–134; these read DHGKST and NKID.

Belongs to the TRAFAC class translation factor GTPase superfamily. Classic translation factor GTPase family. LepA subfamily.

It localises to the cell inner membrane. It carries out the reaction GTP + H2O = GDP + phosphate + H(+). Required for accurate and efficient protein synthesis under certain stress conditions. May act as a fidelity factor of the translation reaction, by catalyzing a one-codon backward translocation of tRNAs on improperly translocated ribosomes. Back-translocation proceeds from a post-translocation (POST) complex to a pre-translocation (PRE) complex, thus giving elongation factor G a second chance to translocate the tRNAs correctly. Binds to ribosomes in a GTP-dependent manner. This is Elongation factor 4 from Azoarcus sp. (strain BH72).